Consider the following 189-residue polypeptide: Autophagy receptor ATG45 (189 aa).

The segment at 1–96 is binds glycogen; it reads MSNFLLVIPE…TNNILHFKDN (96 aa). The segment at 97–189 is required for sequestration into autophagosomes; it reads EASQLMDIPL…AKKVKTYWNK (93 aa). A Phosphoserine modification is found at Ser107. The ATG8 interaction motif (AIM) signature appears at 127-130; the sequence is YVNL. At Ser172 the chain carries Phosphoserine. Residues 176 to 187 are may facilitate interactions with the autophagosome membrane; it reads LMCIAKKVKTYW.

As to quaternary structure, interacts with ATG8.

It localises to the cytoplasm. It is found in the cytosol. Its subcellular location is the cytoplasmic vesicle. The protein localises to the autophagosome. Functionally, autophagy receptor for glycogen that facilitates the sequestration of glycogen assemblies into autophagosomes as part of bulk autophagy; the autophagy of glycogen (glycophagy) is stimulated during prolonged nitrogen starvation and during sporulation. The sequence is that of Autophagy receptor ATG45 from Saccharomyces cerevisiae (strain ATCC 204508 / S288c) (Baker's yeast).